The primary structure comprises 28 residues: FLAKKVAKTVAKQAAKQGAKYVANKHME.

A Glutamic acid 1-amide modification is found at E28.

As to expression, expressed by the venom gland.

It localises to the secreted. The protein is Short cationic peptide-1b of Cupiennius salei (American wandering spider).